Here is a 428-residue protein sequence, read N- to C-terminus: MTEAMNITLSTQPADARWGEKATYSINNDGITLHLNGSDDLGLIQRAARKIDGLGIKHVTLAGEGWDTDRSWAFWAGYKGPKGTRKIEWANLDEAGQKELESRLMIIDWVRDTINAPAEELGPEQLAQRAVDLLCKAAGDKMSYRITKGEDLREQNYMGLHTVGRGSERPPVLLALDYNPTGDKQAPVYACLVGKGITFDTGGYSLKQSAFMDSMKSDMGGAATITGALAFAITRGLNKRVKLYLCCADNMVSGNAFKLGDIIRYRNGKNVEVMNTDAEGRLVLADGLIDASAQKPELIIDMATLTGAAKTALGNDYHALFTFDDKLASRLMASAAAENEPFWRLPLAEFHRSQLPSNFAELNNTASAAYPAGASTAAGFLSHFVENYHEGWLHIDCSATYRKAGVEQWSAGATGLGVRTIANLLTAE.

2 residues coordinate Mn(2+): lysine 195 and aspartate 200. Lysine 207 is an active-site residue. 3 residues coordinate Mn(2+): aspartate 218, aspartate 277, and glutamate 279. Residue arginine 281 is part of the active site.

The protein belongs to the peptidase M17 family. In terms of assembly, homohexamer. The cofactor is Mn(2+).

Its subcellular location is the cytoplasm. It catalyses the reaction Release of an N-terminal amino acid, Xaa, from a peptide or arylamide. Xaa is preferably Glu or Asp but may be other amino acids, including Leu, Met, His, Cys and Gln.. Its function is as follows. Probably plays an important role in intracellular peptide degradation. The chain is Peptidase B from Enterobacter sp. (strain 638).